A 56-amino-acid chain; its full sequence is uncharacterized protein (56 aa).

A helical transmembrane segment spans residues 33-53 (INIIYLAIMKIIMNIIMMIMI).

The protein resides in the host membrane. This is an uncharacterized protein from Bos taurus (Bovine).